A 448-amino-acid polypeptide reads, in one-letter code: Bifunctional protein GlmU (448 aa).

The tract at residues 1 to 229 (MNNHTLNIII…NDEIQGINNL (229 aa)) is pyrophosphorylase. UDP-N-acetyl-alpha-D-glucosamine contacts are provided by residues 11 to 14 (LAAG), Lys-25, Gln-76, 81 to 82 (GT), 103 to 105 (YGD), Gly-140, Glu-154, Asn-169, and Asn-227. Asp-105 is a Mg(2+) binding site. Asn-227 provides a ligand contact to Mg(2+). The interval 230 to 250 (LQLVRAEKIYQKQQAKLLLLS) is linker. Residues 251–448 (GIMIYNPSNF…NEKKQIHKKL (198 aa)) form an N-acetyltransferase region. Lys-351 contacts UDP-N-acetyl-alpha-D-glucosamine. Catalysis depends on His-363, which acts as the Proton acceptor. UDP-N-acetyl-alpha-D-glucosamine is bound by residues Tyr-366 and Asn-377. Acetyl-CoA-binding positions include Ala-380, 386-387 (NY), Ser-405, and Ala-423.

In the N-terminal section; belongs to the N-acetylglucosamine-1-phosphate uridyltransferase family. It in the C-terminal section; belongs to the transferase hexapeptide repeat family. Homotrimer. It depends on Mg(2+) as a cofactor.

The protein localises to the cytoplasm. The catalysed reaction is alpha-D-glucosamine 1-phosphate + acetyl-CoA = N-acetyl-alpha-D-glucosamine 1-phosphate + CoA + H(+). It carries out the reaction N-acetyl-alpha-D-glucosamine 1-phosphate + UTP + H(+) = UDP-N-acetyl-alpha-D-glucosamine + diphosphate. Its pathway is nucleotide-sugar biosynthesis; UDP-N-acetyl-alpha-D-glucosamine biosynthesis; N-acetyl-alpha-D-glucosamine 1-phosphate from alpha-D-glucosamine 6-phosphate (route II): step 2/2. It functions in the pathway nucleotide-sugar biosynthesis; UDP-N-acetyl-alpha-D-glucosamine biosynthesis; UDP-N-acetyl-alpha-D-glucosamine from N-acetyl-alpha-D-glucosamine 1-phosphate: step 1/1. It participates in bacterial outer membrane biogenesis; LPS lipid A biosynthesis. In terms of biological role, catalyzes the last two sequential reactions in the de novo biosynthetic pathway for UDP-N-acetylglucosamine (UDP-GlcNAc). The C-terminal domain catalyzes the transfer of acetyl group from acetyl coenzyme A to glucosamine-1-phosphate (GlcN-1-P) to produce N-acetylglucosamine-1-phosphate (GlcNAc-1-P), which is converted into UDP-GlcNAc by the transfer of uridine 5-monophosphate (from uridine 5-triphosphate), a reaction catalyzed by the N-terminal domain. This chain is Bifunctional protein GlmU, found in Buchnera aphidicola subsp. Baizongia pistaciae (strain Bp).